Reading from the N-terminus, the 108-residue chain is Glutaredoxin-1 (108 aa).

Residues 3-106 (EEFVQQRLAN…DILSSIGVLR (104 aa)) form the Glutaredoxin domain. A disulfide bond links Cys-23 and Cys-26.

Belongs to the glutaredoxin family.

Its subcellular location is the virion. In terms of biological role, has thioltransferase and dehydroascorbate reductase activities. This Camelpox virus (strain M-96) protein is Glutaredoxin-1 (OPG075).